Reading from the N-terminus, the 144-residue chain is uncharacterized protein (144 aa).

Residues 13-120 enclose the HIT domain; that stretch reads IFCGIVEGNV…VPKYETGLGF (108 aa). Positions 105-109 match the Histidine triad motif motif; that stretch reads HYHMH.

This is an uncharacterized protein from Mycoplasma pneumoniae (strain ATCC 29342 / M129 / Subtype 1) (Mycoplasmoides pneumoniae).